The following is a 563-amino-acid chain: CTP synthase (563 aa).

The interval 1–280 is amidoligase domain; that stretch reads MTKFVFVTGG…DEMICMKLQL (280 aa). Ser13 is a CTP binding site. Ser13 is a UTP binding site. ATP contacts are provided by residues 14–19 and Asp71; that span reads SLGKGI. 2 residues coordinate Mg(2+): Asp71 and Glu154. Residues 161–163, 201–206, and Lys237 contribute to the CTP site; these read DIE and KTKPTQ. UTP is bound by residues 201–206 and Lys237; that span reads KTKPTQ. The Glutamine amidotransferase type-1 domain occupies 305–557; the sequence is TIAMAGKYTE…IAAALEHHAA (253 aa). Gly366 provides a ligand contact to L-glutamine. Cys393 functions as the Nucleophile; for glutamine hydrolysis in the catalytic mechanism. L-glutamine-binding positions include 394–397, Glu417, and Arg483; that span reads LGMQ. Active-site residues include His530 and Glu532.

The protein belongs to the CTP synthase family. Homotetramer.

It carries out the reaction UTP + L-glutamine + ATP + H2O = CTP + L-glutamate + ADP + phosphate + 2 H(+). It catalyses the reaction L-glutamine + H2O = L-glutamate + NH4(+). The enzyme catalyses UTP + NH4(+) + ATP = CTP + ADP + phosphate + 2 H(+). It functions in the pathway pyrimidine metabolism; CTP biosynthesis via de novo pathway; CTP from UDP: step 2/2. With respect to regulation, allosterically activated by GTP, when glutamine is the substrate; GTP has no effect on the reaction when ammonia is the substrate. The allosteric effector GTP functions by stabilizing the protein conformation that binds the tetrahedral intermediate(s) formed during glutamine hydrolysis. Inhibited by the product CTP, via allosteric rather than competitive inhibition. In terms of biological role, catalyzes the ATP-dependent amination of UTP to CTP with either L-glutamine or ammonia as the source of nitrogen. Regulates intracellular CTP levels through interactions with the four ribonucleotide triphosphates. This chain is CTP synthase, found in Leptothrix cholodnii (strain ATCC 51168 / LMG 8142 / SP-6) (Leptothrix discophora (strain SP-6)).